The following is a 626-amino-acid chain: (+)-3-carene synthase 1, chloroplastic (626 aa).

The N-terminal 45 residues, 1-45 (MSLISAVPLASSCVSKSLISSVREHKALRRAIATLQMSRPGKSVA), are a transit peptide targeting the chloroplast. 3 residues coordinate Mg(2+): D377, D381, and D529. Residues 377-381 (DDMYD) carry the DDXXD motif motif.

The protein belongs to the terpene synthase family. Tpsd subfamily. It depends on Mg(2+) as a cofactor. The cofactor is Mn(2+).

Its subcellular location is the plastid. It localises to the chloroplast. The enzyme catalyses (2E)-geranyl diphosphate = (+)-car-3-ene + diphosphate. It catalyses the reaction (2E)-geranyl diphosphate = terpinolene + diphosphate. The protein operates within terpene metabolism; oleoresin biosynthesis. Its pathway is secondary metabolite biosynthesis; terpenoid biosynthesis. In terms of biological role, monoterpene synthase (TPS) involved in the biosynthesis of monoterpene natural products included in conifer oleoresin secretions and volatile emissions; these compounds contribute to biotic and abiotic stress defense against herbivores and pathogens. Catalyzes the conversion of (2E)-geranyl diphosphate (GPP) to (+)-3-carene and, to a lower extent, to terpinolene. This Pinus banksiana (Jack pine) protein is (+)-3-carene synthase 1, chloroplastic.